Reading from the N-terminus, the 355-residue chain is Alanine racemase (355 aa).

The active-site Proton acceptor; specific for D-alanine is the lysine 34. Lysine 34 carries the post-translational modification N6-(pyridoxal phosphate)lysine. Arginine 133 contacts substrate. Tyrosine 249 (proton acceptor; specific for L-alanine) is an active-site residue. Methionine 297 serves as a coordination point for substrate.

Belongs to the alanine racemase family. Pyridoxal 5'-phosphate serves as cofactor.

The enzyme catalyses L-alanine = D-alanine. Its pathway is amino-acid biosynthesis; D-alanine biosynthesis; D-alanine from L-alanine: step 1/1. In terms of biological role, catalyzes the interconversion of L-alanine and D-alanine. May also act on other amino acids. The sequence is that of Alanine racemase (alr) from Rickettsia rickettsii (strain Sheila Smith).